Here is a 425-residue protein sequence, read N- to C-terminus: Inhibin beta A chain (425 aa).

An N-terminal signal peptide occupies residues 1-20 (MPLLWLRGFLLASCWIIVRS). Positions 21-309 (SPTPGSEGHS…EDHPHRRRRR (289 aa)) are excised as a propeptide. The N-linked (GlcNAc...) asparagine glycan is linked to asparagine 165. Positions 259-289 (KKKKKEEEGEGKKRDGEGGAGGDEEKEQSHR) are disordered. The span at 263–275 (KEEEGEGKKRDGE) shows a compositional bias: basic and acidic residues. 4 cysteine pairs are disulfide-bonded: cysteine 313-cysteine 321, cysteine 320-cysteine 390, cysteine 349-cysteine 422, and cysteine 353-cysteine 424.

Belongs to the TGF-beta family. As to quaternary structure, dimeric, linked by one or more disulfide bonds. Inhibin A is a dimer of alpha/INHA and beta-A/INHBA. Activin A is a homodimer of beta-A/INHBA. Activin AB is a dimer of beta-A/INHBA and beta-B/INHBB. Interacts with FST and FSTL3; these interactions prevent activin A interaction to its type II receptor. Activin A interacts with ACVR2A. Activin A interacts with BMPR2. Inhibin A interacts with ACVR1; this interaction creates a non-signaling complex (NSC) that inhibits ACVR1-mediated BMP signaling. Inhibin A interacts with ACVR2A.

It is found in the secreted. In terms of biological role, inhibins/activins are involved in regulating a number of diverse functions such as hypothalamic and pituitary hormone secretion, gonadal hormone secretion, germ cell development and maturation, erythroid differentiation, insulin secretion, nerve cell survival, embryonic axial development or bone growth, depending on their subunit composition. Activin A is a homodimer of INHBA that plays a role in several essential biological processes including embryonic development, stem cell maintenance and differentiation, haematopoiesis, cell proliferation and tissue fibrosis. Signals through type I (such as ACVR1B or ACVR1C) and type II receptors (such as ACVR2A, ACVR2B or BMPR2) which, upon ligand binding, phosphorylate SMAD2 and SMAD3 intracellular signaling mediators that form a complex with SMAD4, translocate to the nucleus and modulate gene expression. Can also activate alternative non-canonical intracellular signaling pathways including the p38 MAPK, extracellular signal-regulated kinases 1/2 (ERK1/2) and c-Jun N-terminal kinases (JNKs) to modulate cell migration and differentiation. Alternatively, promotes osteoblastic differentiation via ACVRL1-SMAD1/5/9 pathway. In addition, can engage the type I receptor ACVR1 to form an ACVR1-activin A-type II receptor non-signaling complex (NSC) that renders receptors unavailable for engagement with BMPs, hence resulting in an apparent inhibition of ACVR1-mediated BMP signaling. Functionally, inhibin A is a dimer of alpha/INHA and beta-A/INHBA that functions as a feedback regulator in the hypothalamic-pituitary-gonadal (HPG) axis. Inhibits the secretion of FSH from the anterior pituitary gland by acting on pituitary gonadotrope cells. Antagonizes activin A by binding to the proteoglycan, betaglycan, and forming a stable complex with and, thereby, sequestering type II activin receptors while excluding type I receptor. This is Inhibin beta A chain (INHBA) from Bos taurus (Bovine).